The primary structure comprises 3598 residues: Dystrophin, isoforms A/C/F/G/H (3598 aa).

Positions 1 to 230 (MEPGILIDER…YVMCLYHAME (230 aa)) are actin-binding. 2 Calponin-homology (CH) domains span residues 12 to 116 (HIQK…LEFN) and 127 to 230 (NGVE…HAME). Positions 233-297 (RTRQQEQEQD…SGELKTHSMR (65 aa)) are disordered. Residues 267 to 286 (NDQTSLGLYTSDSAGSMEQR) show a composition bias toward polar residues. Spectrin repeat units follow at residues 307–420 (VEIS…KILM), 423–525 (AEFQ…KLQQ), 851–963 (QDFG…AIEN), 1056–1170 (SHID…LLEH), 1173–1275 (TQLG…LLEQ), and 1381–1483 (SYES…TLER). Disordered regions lie at residues 1633–1696 (ARNT…VMPD), 1716–1742 (SLNP…SSPA), 1799–1854 (EDSD…ENTS), 1878–1941 (RDIL…EPLV), and 2204–2233 (GPRI…NEPS). Over residues 1663–1679 (SGESPSSAHTSSSESPT) the composition is skewed to low complexity. Residues 1803 to 1816 (SSVRVDSQGKEMRR) are compositionally biased toward basic and acidic residues. Ser1832 and Ser1838 each carry phosphoserine. Residues 1834–1843 (NDEDSAEQEE) show a composition bias toward acidic residues. Basic and acidic residues predominate over residues 1878–1893 (RDILRDSEEEEPKTPD). The span at 2218 to 2233 (SAATMSCRSEYNNEPS) shows a compositional bias: polar residues. Spectrin repeat units follow at residues 2237-2363 (ALAG…QLKN), 2366-2472 (SDSQ…QLHA), 2475-2576 (HSLQ…RLES), 2579-2712 (EHWN…RLDE), and 2715-2819 (TKMR…VLCQ). The disordered stretch occupies residues 2655–2679 (VSDTSDTEANHDSDSRYMSAEEQSR). Positions 2822–2852 (AQQTHENGDDGRTTSNSGTIGPLPNLGQSVK) are disordered. In terms of domain architecture, WW spans 2849–2882 (QSVKPPWERATTAANVPYYIDHERETTHWDHPEM). The segment at 3107–3163 (KHQAKCNICKEYPIVGFRYRCLKCFNFDMCQKCFFFGRNAKNHKLTHPMHEYCTTTT) adopts a ZZ-type zinc-finger fold. Zn(2+) contacts are provided by Cys3112, Cys3115, Cys3127, Cys3130, Cys3136, Cys3139, His3149, and His3153. Residue Ser3207 is modified to Phosphoserine. Disordered regions lie at residues 3316 to 3344 (EQSG…GEQG), 3387 to 3449 (DEPN…KGIM), 3483 to 3545 (LHQQ…QQHL), and 3560 to 3598 (ELES…ELQK). Polar residues-rich tracts occupy residues 3325 to 3337 (NGMQ…MTGL) and 3408 to 3439 (ALNS…QQNG). The span at 3485 to 3499 (QQQQQQLQQQPPQQQ) shows a compositional bias: low complexity. Gly residues predominate over residues 3505-3523 (GNGGMDISGGMQTSGGYLG). Residues 3534–3545 (SSLMQQQHQQHL) show a composition bias toward low complexity. Positions 3560-3570 (ELESINDDLED) are enriched in acidic residues. Residues 3571 to 3589 (SSSSNTTNTTTTTTTTATT) show a composition bias toward low complexity.

As to quaternary structure, component of the dystrophin associated protein complex (DAPC). Interacts with Dg, via the Dg WW domain binding sites. Isoform A, isoform F and isoform G are expressed in the midgut endoderm of stage 12 embryos. In stage 16 embryos, expression is also seen in the pericardial cells, cells at the ectoderm segmental border and cells along the midline of the CNS. During embryogenesis, isoform A is also expressed in the visceral mesoderm, muscle attachment sites, mesectodermal cells at the midline, the gut, and throughout muscle fibers. In larvae, isoform A is found in all muscle fibers, but not detectable in the brain or neuropil.

It localises to the cell membrane. The protein localises to the sarcolemma. Its subcellular location is the cytoplasm. The protein resides in the cytoskeleton. In terms of biological role, required for the maintenance of appropriate synaptic retrograde communication and the stabilization of muscle cell architecture or physiology. Both det and Dg are required for maintenance of early dpp signaling in the presumptive crossvein. Isoform A is not required to maintain muscle integrity, but plays a role in neuromuscular homeostasis by regulating neurotransmitter release. May play a role in anchoring the cytoskeleton to the plasma membrane. In Drosophila melanogaster (Fruit fly), this protein is Dystrophin, isoforms A/C/F/G/H (Dys).